Consider the following 312-residue polypeptide: Malate dehydrogenase (312 aa).

NAD(+)-binding positions include 7–13 (GAAGGIG) and Asp34. The substrate site is built by Arg81 and Arg87. NAD(+)-binding positions include Asn94 and 117-119 (ITN). The substrate site is built by Asn119 and Arg153. The active-site Proton acceptor is His177. Residue Met227 coordinates NAD(+).

It belongs to the LDH/MDH superfamily. MDH type 1 family. In terms of assembly, homodimer.

It catalyses the reaction (S)-malate + NAD(+) = oxaloacetate + NADH + H(+). Catalyzes the reversible oxidation of malate to oxaloacetate. This Salmonella newport (strain SL254) protein is Malate dehydrogenase.